A 566-amino-acid polypeptide reads, in one-letter code: Liver carboxylesterase (566 aa).

Residues 1 to 18 (MWLLPLVLTSLASSATWA) form the signal peptide. N80 is a glycosylation site (N-linked (GlcNAc...) asparagine). An intrachain disulfide couples C88 to C117. The active-site Acyl-ester intermediate is the S222. A disulfide bond links C274 and C285. E354 functions as the Charge relay system in the catalytic mechanism. S379 bears the Phosphoserine mark. H467 serves as the catalytic Charge relay system. Residues 563-566 (HAEL) carry the Prevents secretion from ER motif.

Belongs to the type-B carboxylesterase/lipase family.

The protein resides in the endoplasmic reticulum lumen. The catalysed reaction is a carboxylic ester + H2O = an alcohol + a carboxylate + H(+). Its activity is regulated as follows. Activated by CHAPS at concentrations of up to 130 mM, higher concentrations reduce activity. In the presence of CHAPS, activity is stimulated by non-ionic detergents. Inhibited by the esterase inhibitors diisopropylfluorophosphate and phenylmethylsulfonyl fluoride. Functionally, involved in the detoxification of xenobiotics and in the activation of ester and amide prodrugs. Active towards triacylglycerides containing short-chain fatty acids from C2 to C6, and 1(3)-monoacylglycerols containing fatty acids from C2 to C12. Inactive on long-chain triacylglycerols and diacylglycerol. Hydrolyzes aromatic and alkyl esters and vitamin A acetate. The hydrolysis rate depends upon the amino acid promoiety and the esterification site of the prodrug. Aromatic promoieties are favored, highest rates are observed with phenylalanyl progdrugs, hydrolysis of valyl and isoleucyl prodrugs is less efficient. With floxuridine prodrugs, activity is higher on 5' monoesters than on 3' monoesters. With gemcitabine prodrugs, activity is higher on 3' monoesters than on 5' monoesters. This chain is Liver carboxylesterase, found in Sus scrofa (Pig).